The sequence spans 357 residues: Protein-glutamate methylesterase/protein-glutamine glutaminase 1 (357 aa).

A Response regulatory domain is found at 7-125 (RAVIIDDSLL…QFDPEEIGNI (119 aa)). Position 58 is a 4-aspartylphosphate (Asp58). Residues 162–344 (KKSPIQAICI…VEYIEPVTEI (183 aa)) enclose the CheB-type methylesterase domain. Residues Ser174, His201, and Asp297 contribute to the active site.

This sequence belongs to the CheB family. Post-translationally, phosphorylated by CheA. Phosphorylation of the N-terminal regulatory domain activates the methylesterase activity.

The protein resides in the cytoplasm. The enzyme catalyses [protein]-L-glutamate 5-O-methyl ester + H2O = L-glutamyl-[protein] + methanol + H(+). The catalysed reaction is L-glutaminyl-[protein] + H2O = L-glutamyl-[protein] + NH4(+). Its function is as follows. Involved in chemotaxis. Part of a chemotaxis signal transduction system that modulates chemotaxis in response to various stimuli. Catalyzes the demethylation of specific methylglutamate residues introduced into the chemoreceptors (methyl-accepting chemotaxis proteins or MCP) by CheR. Also mediates the irreversible deamidation of specific glutamine residues to glutamic acid. This is Protein-glutamate methylesterase/protein-glutamine glutaminase 1 from Leptospira interrogans serogroup Icterohaemorrhagiae serovar Lai (strain 56601).